The following is a 249-amino-acid chain: tRNA pseudouridine synthase A (249 aa).

Asp-53 (nucleophile) is an active-site residue. Residue Tyr-111 coordinates substrate.

It belongs to the tRNA pseudouridine synthase TruA family. In terms of assembly, homodimer.

It carries out the reaction uridine(38/39/40) in tRNA = pseudouridine(38/39/40) in tRNA. Formation of pseudouridine at positions 38, 39 and 40 in the anticodon stem and loop of transfer RNAs. This chain is tRNA pseudouridine synthase A, found in Streptococcus equi subsp. zooepidemicus (strain MGCS10565).